Here is a 447-residue protein sequence, read N- to C-terminus: ATP-dependent 6-phosphofructokinase (447 aa).

Residues Gly88, 154-155, and 179-182 contribute to the ATP site; these read RG and GDGT. Asp180 is a Mg(2+) binding site. Residues 208-210, 253-255, Glu315, and 368-371 each bind substrate; these read TVD, MGR, and YIIR. The Proton acceptor role is filled by Asp210.

Belongs to the phosphofructokinase type A (PFKA) family. PPi-dependent PFK group II subfamily. Atypical ATP-dependent clade 'X' sub-subfamily. Homodimer. The cofactor is Mg(2+).

The protein localises to the cytoplasm. The catalysed reaction is beta-D-fructose 6-phosphate + ATP = beta-D-fructose 1,6-bisphosphate + ADP + H(+). Its pathway is carbohydrate degradation; glycolysis; D-glyceraldehyde 3-phosphate and glycerone phosphate from D-glucose: step 3/4. In terms of biological role, catalyzes the phosphorylation of D-fructose 6-phosphate to fructose 1,6-bisphosphate by ATP, the first committing step of glycolysis. This is ATP-dependent 6-phosphofructokinase from Borreliella burgdorferi (strain ATCC 35210 / DSM 4680 / CIP 102532 / B31) (Borrelia burgdorferi).